The chain runs to 1061 residues: Ribonuclease 3 (1061 aa).

Disordered stretches follow at residues 1–20 and 149–244; these read MDFTEIHKRSRRKKFQQIHQ and PLHS…SYNE. Over residues 156-173 the composition is skewed to basic and acidic residues; it reads KTPERKENEEDSDSEIRS. 2 RNase III domains span residues 586-759 and 811-935; these read LSVF…LDSG and FHRL…VDKG. Positions 851, 921, and 924 each coordinate Mg(2+). Residues 962–1037 form the DRBM domain; sequence DAKSHLQQWC…AENALAALEK (76 aa).

This sequence belongs to the ribonuclease III family. The cofactor is Mg(2+). Mn(2+) serves as cofactor.

It is found in the nucleus. The catalysed reaction is Endonucleolytic cleavage to 5'-phosphomonoester.. Its function is as follows. Executes the initial step of microRNA (miRNA) processing in the nucleus, that is the cleavage of pri-miRNA to release pre-miRNA. Involved in pre-rRNA processing. Cleaves double-strand RNA and does not cleave single-strand RNA. Involved in fertility. Required for the function or synthesis of the let-7 miRNA. This is Ribonuclease 3 from Caenorhabditis briggsae.